A 786-amino-acid polypeptide reads, in one-letter code: LPS-assembly protein LptD (786 aa).

Residues 1 to 39 form the signal peptide; the sequence is MPPKPLFPNVFPGDGAPRKRRLALALLAVPGLVPAVSYA.

This sequence belongs to the LptD family. As to quaternary structure, component of the lipopolysaccharide transport and assembly complex. Interacts with LptE and LptA.

The protein resides in the cell outer membrane. In terms of biological role, together with LptE, is involved in the assembly of lipopolysaccharide (LPS) at the surface of the outer membrane. This Burkholderia ambifaria (strain ATCC BAA-244 / DSM 16087 / CCUG 44356 / LMG 19182 / AMMD) (Burkholderia cepacia (strain AMMD)) protein is LPS-assembly protein LptD.